The chain runs to 166 residues: Large ribosomal subunit protein uL10 (166 aa).

This sequence belongs to the universal ribosomal protein uL10 family. Part of the ribosomal stalk of the 50S ribosomal subunit. The N-terminus interacts with L11 and the large rRNA to form the base of the stalk. The C-terminus forms an elongated spine to which L12 dimers bind in a sequential fashion forming a multimeric L10(L12)X complex.

Forms part of the ribosomal stalk, playing a central role in the interaction of the ribosome with GTP-bound translation factors. This Mesoplasma florum (strain ATCC 33453 / NBRC 100688 / NCTC 11704 / L1) (Acholeplasma florum) protein is Large ribosomal subunit protein uL10.